Reading from the N-terminus, the 240-residue chain is Guanine nucleotide exchange factor sopE2 (240 aa).

Residues 78 to 240 form a GEF catalytic domain region; the sequence is LTSKTVKDFM…IANKYLQNAS (163 aa).

Belongs to the GEF (guanine exchange factor) SopE family.

It localises to the secreted. Its function is as follows. Activator for CDC42 by directly engaging this Rho GTPase and acting as potent guanine nucleotide exchange factor (GEF). This activation results in actin cytoskeleton rearrangements and stimulates membrane ruffling, promoting bacterial entry into non-phagocytic cells. Chaperone InvB is required for secretion, translocation and stabilization of intracellular levels of sopE2. The polypeptide is Guanine nucleotide exchange factor sopE2 (sopE2) (Salmonella paratyphi A (strain ATCC 9150 / SARB42)).